A 362-amino-acid chain; its full sequence is tRNA/tmRNA (uracil-C(5))-methyltransferase (362 aa).

S-adenosyl-L-methionine contacts are provided by glutamine 182, tyrosine 210, asparagine 215, glutamate 231, and aspartate 293. Cysteine 318 functions as the Nucleophile in the catalytic mechanism. Glutamate 352 (proton acceptor) is an active-site residue.

This sequence belongs to the class I-like SAM-binding methyltransferase superfamily. RNA M5U methyltransferase family. TrmA subfamily.

It catalyses the reaction uridine(54) in tRNA + S-adenosyl-L-methionine = 5-methyluridine(54) in tRNA + S-adenosyl-L-homocysteine + H(+). The catalysed reaction is uridine(341) in tmRNA + S-adenosyl-L-methionine = 5-methyluridine(341) in tmRNA + S-adenosyl-L-homocysteine + H(+). Its function is as follows. Dual-specificity methyltransferase that catalyzes the formation of 5-methyluridine at position 54 (m5U54) in all tRNAs, and that of position 341 (m5U341) in tmRNA (transfer-mRNA). In Neisseria meningitidis serogroup A / serotype 4A (strain DSM 15465 / Z2491), this protein is tRNA/tmRNA (uracil-C(5))-methyltransferase.